A 199-amino-acid polypeptide reads, in one-letter code: NAD(P)H dehydrogenase (quinone) (199 aa).

Residues 4–190 (VLVLYYSTYG…EGARHQGELI (187 aa)) form the Flavodoxin-like domain. Residues 10–15 (STYGHV) and 78–80 (TRF) each bind FMN. Tyr12 contacts NAD(+). Trp98 is a substrate binding site. FMN contacts are provided by residues 113 to 119 (STATQHG) and His134.

It belongs to the WrbA family. FMN serves as cofactor.

It carries out the reaction a quinone + NADH + H(+) = a quinol + NAD(+). The catalysed reaction is a quinone + NADPH + H(+) = a quinol + NADP(+). The polypeptide is NAD(P)H dehydrogenase (quinone) (Cupriavidus metallidurans (strain ATCC 43123 / DSM 2839 / NBRC 102507 / CH34) (Ralstonia metallidurans)).